Reading from the N-terminus, the 80-residue chain is Cell division activator CedA (80 aa).

This sequence belongs to the CedA family.

Activates the cell division inhibited by chromosomal DNA over-replication. This Salmonella typhimurium (strain LT2 / SGSC1412 / ATCC 700720) protein is Cell division activator CedA.